Consider the following 262-residue polypeptide: Small ribosomal subunit protein uS2 (262 aa).

The disordered stretch occupies residues 228–262 (VSNEEVAAEQNIDLDESKEATEAETTEENTSVESN).

This sequence belongs to the universal ribosomal protein uS2 family.

The polypeptide is Small ribosomal subunit protein uS2 (Staphylococcus saprophyticus subsp. saprophyticus (strain ATCC 15305 / DSM 20229 / NCIMB 8711 / NCTC 7292 / S-41)).